The following is a 73-amino-acid chain: MRFTSMIFVLVVILINSLFNFNVLASSVIETTKNDVCSTPCTRRYGTYECWHDCLHERYNDGGCVDGRCCCKK.

An N-terminal signal peptide occupies residues 1 to 25 (MRFTSMIFVLVVILINSLFNFNVLA). Intrachain disulfides connect Cys-37-Cys-71, Cys-41-Cys-64, Cys-50-Cys-69, and Cys-54-Cys-70.

Belongs to the DEFL family.

The protein resides in the secreted. In Arabidopsis thaliana (Mouse-ear cress), this protein is Putative defensin-like protein 57.